The primary structure comprises 175 residues: MTTIVSVRRNGQVVVGGDGQVSLGNTVMKGNARKVRRLYNGKVLAGFAGGTADAFTLFELFERKLEMHQGHLLKSAVELAKDWRTDRALRKLEAMLIVADEKESLIITGIGDVVQPEEDQILAIGSGGNYALSAARALVENTELSAREIVEKSLKIAGDVCVFTNTNFTIEELPN.

Threonine 2 is an active-site residue. Residues glycine 158, cysteine 161, and threonine 164 each coordinate Na(+).

Belongs to the peptidase T1B family. HslV subfamily. As to quaternary structure, a double ring-shaped homohexamer of HslV is capped on each side by a ring-shaped HslU homohexamer. The assembly of the HslU/HslV complex is dependent on binding of ATP.

It localises to the cytoplasm. It catalyses the reaction ATP-dependent cleavage of peptide bonds with broad specificity.. With respect to regulation, allosterically activated by HslU binding. Protease subunit of a proteasome-like degradation complex believed to be a general protein degrading machinery. This chain is ATP-dependent protease subunit HslV, found in Haemophilus influenzae (strain 86-028NP).